The chain runs to 431 residues: Cyclic 2,3-diphosphoglycerate synthetase (431 aa).

It belongs to the cyclic 2,3-diphosphoglycerate synthetase family.

Its subcellular location is the cytoplasm. The enzyme catalyses (2R)-2,3-bisphosphoglycerate + ATP + H(+) = cyclic (2R)-2,3-bisphosphoglycerate + ADP + phosphate. Its function is as follows. Catalyzes the formation of cyclic 2,3-diphosphoglycerate (cDPG) by formation of an intramolecular phosphoanhydride bond at the expense of ATP. This chain is Cyclic 2,3-diphosphoglycerate synthetase, found in Pyrococcus furiosus (strain ATCC 43587 / DSM 3638 / JCM 8422 / Vc1).